Consider the following 152-residue polypeptide: D-aminoacyl-tRNA deacylase (152 aa).

The short motif at 137–138 (GP) is the Gly-cisPro motif, important for rejection of L-amino acids element.

It belongs to the DTD family. In terms of assembly, homodimer.

It localises to the cytoplasm. The catalysed reaction is glycyl-tRNA(Ala) + H2O = tRNA(Ala) + glycine + H(+). It catalyses the reaction a D-aminoacyl-tRNA + H2O = a tRNA + a D-alpha-amino acid + H(+). Its function is as follows. An aminoacyl-tRNA editing enzyme that deacylates mischarged D-aminoacyl-tRNAs. Also deacylates mischarged glycyl-tRNA(Ala), protecting cells against glycine mischarging by AlaRS. Acts via tRNA-based rather than protein-based catalysis; rejects L-amino acids rather than detecting D-amino acids in the active site. By recycling D-aminoacyl-tRNA to D-amino acids and free tRNA molecules, this enzyme counteracts the toxicity associated with the formation of D-aminoacyl-tRNA entities in vivo and helps enforce protein L-homochirality. The protein is D-aminoacyl-tRNA deacylase of Thermus aquaticus.